The sequence spans 105 residues: Met repressor (105 aa).

Belongs to the MetJ family. In terms of assembly, homodimer.

The protein resides in the cytoplasm. In terms of biological role, this regulatory protein, when combined with SAM (S-adenosylmethionine) represses the expression of the methionine regulon and of enzymes involved in SAM synthesis. This is Met repressor from Shigella boydii serotype 18 (strain CDC 3083-94 / BS512).